The following is a 248-amino-acid chain: Transcription factor MYB1 (248 aa).

2 HTH myb-type domains span residues 9 to 61 and 62 to 116; these read KEGM…LNYL and RPGI…GRRV. 2 consecutive DNA-binding regions (H-T-H motif) follow at residues 37-61 and 89-112; these read WRSLPKRAGLKRCGKSCRLRWLNYL and WSLIAGRLPGRTDNEIKNYWNTNL. Positions 118–144 are disordered; it reads DQSHQHCRPNPTITSTKPADAPPANAN.

The protein resides in the nucleus. In terms of biological role, transcription activator involved in the spatiotemporal regulation of flavonoid biosynthesis specifically in the corms of Montbretia. Activates the promoters of enzymes involved in the biosynthesis of the flavonol kaempferol and the flavonol-glycoside kaempferol-rhamnoside. This chain is Transcription factor MYB1, found in Crocosmia x crocosmiiflora (Montbretia).